Reading from the N-terminus, the 160-residue chain is Transcription elongation factor GreA (160 aa).

Residues 10-37 adopt a coiled-coil conformation; that stretch reads TLEGKAKLENELQELKTVKRKEVVERIK.

Belongs to the GreA/GreB family.

Its function is as follows. Necessary for efficient RNA polymerase transcription elongation past template-encoded arresting sites. The arresting sites in DNA have the property of trapping a certain fraction of elongating RNA polymerases that pass through, resulting in locked ternary complexes. Cleavage of the nascent transcript by cleavage factors such as GreA or GreB allows the resumption of elongation from the new 3'terminus. GreA releases sequences of 2 to 3 nucleotides. This chain is Transcription elongation factor GreA, found in Listeria welshimeri serovar 6b (strain ATCC 35897 / DSM 20650 / CCUG 15529 / CIP 8149 / NCTC 11857 / SLCC 5334 / V8).